The primary structure comprises 420 residues: Vasopressin V1a receptor (420 aa).

The interval 1 to 45 (MSFPRGSYDPAASNSSPRWPLSAEDANSSREAAGHQKGSDPSGDV) is disordered. Residues 1–54 (MSFPRGSYDPAASNSSPRWPLSAEDANSSREAAGHQKGSDPSGDVRNEELAKLE) are Extracellular-facing. An N-linked (GlcNAc...) asparagine glycan is attached at N27. The segment covering 32–45 (AAGHQKGSDPSGDV) has biased composition (basic and acidic residues). The chain crosses the membrane as a helical span at residues 55–75 (IAVLAVIFVVAVLGNSSVLLA). Residues 76–92 (LHRTPRKTSRMHLFIRH) lie on the Cytoplasmic side of the membrane. The helical transmembrane segment at 93–113 (LSLADLAVAFFQVLPQLCWDI) threads the bilayer. Residues 114–125 (TYRFRGPDWLCR) are Extracellular-facing. A disulfide bridge links C124 with C205. The chain crosses the membrane as a helical span at residues 126–146 (VVKHLQVFAMFASAYMLVVMT). Residues 147 to 168 (ADRYIAVCHPLKTLQQPARRSR) are Cytoplasmic-facing. The helical transmembrane segment at 169 to 189 (LMIAASWVLSFLLSTPQYFIF) threads the bilayer. Residues 190–225 (SMIEIEVNNGTKTQDCWATFIQPWGTRAYVTWMTSG) are Extracellular-facing. N-linked (GlcNAc...) asparagine glycosylation is present at N198. Residues 226 to 246 (VFVVPVVILGTCYGFICYHIW) form a helical membrane-spanning segment. The Cytoplasmic portion of the chain corresponds to 247 to 294 (RNVRGKTASRQSKGSGEDVAPFHKGLLVTPCVSSVKTISRAKIRTVKM). The chain crosses the membrane as a helical span at residues 295-315 (TFVIVTAYILCWAPFFIVQMW). Residues 316–331 (SVWDDNFIWTDSENPS) lie on the Extracellular side of the membrane. A helical membrane pass occupies residues 332–352 (ITITALLASLNSCCNPWIYMF). The Cytoplasmic portion of the chain corresponds to 353-420 (FSGHLLQDCV…RSIRFIPVST (68 aa)). Residues C367 and C368 are each lipidated (S-palmitoyl cysteine). Residues 379–411 (DSDNMSRRQTSYSNNRSPTNSTGTWKDSPKSSR) form a disordered region. Residues 385–403 (RRQTSYSNNRSPTNSTGTW) are compositionally biased toward polar residues. Phosphoserine is present on S406.

This sequence belongs to the G-protein coupled receptor 1 family. Vasopressin/oxytocin receptor subfamily.

Its subcellular location is the cell membrane. Its function is as follows. Receptor for arginine vasopressin. The activity of this receptor is mediated by G proteins which activate a phosphatidyl-inositol-calcium second messenger system. Involved in social memory formation. The protein is Vasopressin V1a receptor (Avpr1a) of Microtus montanus (Montane vole).